Here is a 1049-residue protein sequence, read N- to C-terminus: Presequence protease, mitochondrial (1049 aa).

A mitochondrion-targeting transit peptide spans 1–39 (MLRSYLHLGRHRTPAFRQPLGRLLRPTASILQYAQSRTL). H113 is a binding site for Zn(2+). The active-site Proton acceptor is the E116. Residue H117 participates in Zn(2+) binding. Residue E189 is part of the active site. Zn(2+) is bound at residue E222.

It belongs to the peptidase M16 family. PreP subfamily. As to quaternary structure, monomer and homodimer; homodimerization is induced by binding of the substrate. Zn(2+) is required as a cofactor.

Its subcellular location is the mitochondrion intermembrane space. The protein resides in the mitochondrion matrix. In terms of biological role, degrades mitochondrial transit peptides after their cleavage in the intermembrane space or in the matrix, and presequence peptides; clearance of these peptides is required to keep the presequence processing machinery running. Preferentially cleaves the N-terminal side of paired basic amino acid residues. Also degrades other unstructured peptides. May function as an ATP-dependent peptidase as opposed to a metalloendopeptidase. The chain is Presequence protease, mitochondrial (cym1) from Emericella nidulans (strain FGSC A4 / ATCC 38163 / CBS 112.46 / NRRL 194 / M139) (Aspergillus nidulans).